The chain runs to 151 residues: Regulatory protein RecX (151 aa).

Belongs to the RecX family.

Its subcellular location is the cytoplasm. Functionally, modulates RecA activity. The protein is Regulatory protein RecX of Chlorobium phaeobacteroides (strain BS1).